The sequence spans 624 residues: MTQAEKGEAENGKEKGGEKEKEQRGVKRPIVPALVPESLQEQIQSNFIVVIHPGSTTLRIGRATDTLPASVPHVIARRHKQQGQPLYKDSWLLREGLNKPESNEQRQNGLKMVDQAIWSKKMSNGTRRIPVSPEQARSYNKQMRPAILDHCSGNKWTNTSHHPEFLVGEEALYVNPLDCYNIHWPIRRGQLNIHPGPGGSLTAVLADIEVIWSHAIQKYLEIPLKDLKYYRCILLIPDIYNKQHVKELVNMILMKMGFSGIVVHQESVCATFGSGLSSTCIVDVGDQKTSVCCVEDGVSHRNTRLCLAYGGSDVSRCFYWLMQRAGFPYRECQLTNKMDCLLLQHLKETFCHLDQDISGLQDHEFQIRHPDSPALLYQFRLGDEKLQAPMALFYPATFGIVGQKMTTLQHRSQGDPEDPHDEQYLLATQSKQEQSAKATADRKSASKPIGFEGDLRGQSSDLPERLHSQEVDLGPSQGDCLMAGNDSEEALTALMSRKTAISLFEGKALGLDKAILHSIDCCSSDETKKKMYSSILVVGGGLMFHKAQEFLQHRILNKMPPSFRRIIENVDVITRPKDMDPRLIAWKGGAVLACLDTTQELWIYQREWQRFGVRMLRERAAFVW.

N-acetylmethionine is present on Met-1. Residues 1-25 (MTQAEKGEAENGKEKGGEKEKEQRG) show a composition bias toward basic and acidic residues. Positions 1 to 29 (MTQAEKGEAENGKEKGGEKEKEQRGVKRP) are disordered. Positions 55 and 56 each coordinate ATP. Residue Ser-132 is modified to Phosphoserine. 283–286 (DVGD) provides a ligand contact to ATP. Position 412 is a phosphoserine (Ser-412). The disordered stretch occupies residues 430 to 462 (SKQEQSAKATADRKSASKPIGFEGDLRGQSSDL).

It belongs to the actin family. ARP8 subfamily. In terms of assembly, component of the chromatin remodeling INO80 complex; specifically part of a complex module associated with the DBINO domain of INO80. Exists as monomers and dimers, but the dimer is most probably the biologically relevant form required for stable interactions with histones that exploits the twofold symmetry of the nucleosome core.

The protein resides in the nucleus. Its subcellular location is the chromosome. Its function is as follows. Plays an important role in the functional organization of mitotic chromosomes. Exhibits low basal ATPase activity, and unable to polymerize. Proposed core component of the chromatin remodeling INO80 complex which is involved in transcriptional regulation, DNA replication and probably DNA repair. Required for the recruitment of INO80 (and probably the INO80 complex) to sites of DNA damage Strongly prefer nucleosomes and H3-H4 tetramers over H2A-H2B dimers, suggesting it may act as a nucleosome recognition module within the complex. The polypeptide is Actin-related protein 8 (ACTR8) (Bos taurus (Bovine)).